We begin with the raw amino-acid sequence, 428 residues long: Putative zinc metalloprotease SAS1196 (428 aa).

Histidine 21 lines the Zn(2+) pocket. Glutamate 22 is a catalytic residue. A Zn(2+)-binding site is contributed by histidine 25. Transmembrane regions (helical) follow at residues phenylalanine 172 to alanine 194, glycine 309 to phenylalanine 331, isoleucine 352 to isoleucine 374, and threonine 401 to tryptophan 420. The region spanning alanine 186–lysine 269 is the PDZ domain.

The protein belongs to the peptidase M50B family. It depends on Zn(2+) as a cofactor.

The protein localises to the cell membrane. The sequence is that of Putative zinc metalloprotease SAS1196 from Staphylococcus aureus (strain MSSA476).